Reading from the N-terminus, the 152-residue chain is Cell division protein SepF (152 aa).

Residues 21–56 (EYIETEQDHPEEHEQQKDKQPAYAQKPQGKQNVVSL) are disordered. Residues 26–40 (EQDHPEEHEQQKDKQ) show a composition bias toward basic and acidic residues.

This sequence belongs to the SepF family. In terms of assembly, homodimer. Interacts with FtsZ.

It localises to the cytoplasm. Its function is as follows. Cell division protein that is part of the divisome complex and is recruited early to the Z-ring. Probably stimulates Z-ring formation, perhaps through the cross-linking of FtsZ protofilaments. Its function overlaps with FtsA. The chain is Cell division protein SepF from Bacillus velezensis (strain DSM 23117 / BGSC 10A6 / LMG 26770 / FZB42) (Bacillus amyloliquefaciens subsp. plantarum).